A 289-amino-acid polypeptide reads, in one-letter code: Ribosomal RNA small subunit methyltransferase I (289 aa).

It belongs to the methyltransferase superfamily. RsmI family.

It localises to the cytoplasm. It carries out the reaction cytidine(1402) in 16S rRNA + S-adenosyl-L-methionine = 2'-O-methylcytidine(1402) in 16S rRNA + S-adenosyl-L-homocysteine + H(+). Catalyzes the 2'-O-methylation of the ribose of cytidine 1402 (C1402) in 16S rRNA. The polypeptide is Ribosomal RNA small subunit methyltransferase I (Halalkalibacterium halodurans (strain ATCC BAA-125 / DSM 18197 / FERM 7344 / JCM 9153 / C-125) (Bacillus halodurans)).